The chain runs to 233 residues: Guanylate kinase (233 aa).

One can recognise a Guanylate kinase-like domain in the interval 3–184 (GTIFIISAPS…AVEQLRAIVL (182 aa)). Residue 10-17 (APSGSGKS) coordinates ATP.

This sequence belongs to the guanylate kinase family.

The protein localises to the cytoplasm. It catalyses the reaction GMP + ATP = GDP + ADP. In terms of biological role, essential for recycling GMP and indirectly, cGMP. The polypeptide is Guanylate kinase (Koribacter versatilis (strain Ellin345)).